The following is a 103-amino-acid chain: Pro-glucagon (103 aa).

Belongs to the glucagon family.

The protein localises to the secreted. In terms of biological role, plays a key role in glucose metabolism and homeostasis. Regulates blood glucose by increasing gluconeogenesis and decreasing glycolysis. The chain is Pro-glucagon (gcg) from Aquarana catesbeiana (American bullfrog).